The chain runs to 179 residues: uncharacterized protein (179 aa).

The interval 160–179 (QPIEPNGTQPATETKTPVGV) is disordered. The span at 165–179 (NGTQPATETKTPVGV) shows a compositional bias: polar residues.

This sequence belongs to the Dps family.

This is an uncharacterized protein from Anabaena variabilis.